Consider the following 464-residue polypeptide: Protein FAM90A3 (464 aa).

3 disordered regions span residues 1 to 42 (MMAR…DPRL), 70 to 389 (PATL…HDGA), and 411 to 437 (APSF…SEAP). Basic and acidic residues-rich tracts occupy residues 74–89 (GKKE…KPRV) and 97–114 (NKDK…DPQR). Residues 180 to 197 (LASLSPLRKASLSSSSSL) show a composition bias toward low complexity.

This sequence belongs to the FAM90 family.

The polypeptide is Protein FAM90A3 (Homo sapiens (Human)).